The sequence spans 155 residues: Snaclec agkicetin-C subunit alpha (155 aa).

An N-terminal signal peptide occupies residues 1 to 23; that stretch reads MGRFIFVSFGLLVVFLSLSGTAA. Disulfide bonds link Cys25-Cys36, Cys53-Cys149, and Cys124-Cys141. The 119-residue stretch at 32–150 folds into the C-type lectin domain; the sequence is YIRFCYQPFK…CGLKHVFMCK (119 aa).

It belongs to the snaclec family. In terms of assembly, heterodimer of subunits alpha and beta; disulfide-linked. In terms of tissue distribution, expressed by the venom gland.

The protein resides in the secreted. In terms of biological role, is a potent glycoprotein Ibalpha (GP1BA) antagonist. Concentration-dependently inhibits botrocetin-, ristocetin- and low dose thrombin-induced platelet aggregation. Inhibits platelet adhesion only through inhibiting the vWF interaction with GP1BA, but has minimal effect on other platelet receptors, such as alpha-IIb/beta-3 (ITGA2B/ITGB3) or alpha-2/beta-1 (ITGA2/ITGB1). Causes an instant severe thrombocytopenia in rats and is not lethal to mice. The protein is Snaclec agkicetin-C subunit alpha of Deinagkistrodon acutus (Hundred-pace snake).